Reading from the N-terminus, the 144-residue chain is Large ribosomal subunit protein uL16 (144 aa).

This sequence belongs to the universal ribosomal protein uL16 family. In terms of assembly, part of the 50S ribosomal subunit.

Its function is as follows. Binds 23S rRNA and is also seen to make contacts with the A and possibly P site tRNAs. The chain is Large ribosomal subunit protein uL16 from Bacillus anthracis (strain A0248).